Reading from the N-terminus, the 439-residue chain is Exodeoxyribonuclease 7 large subunit (439 aa).

Belongs to the XseA family. As to quaternary structure, heterooligomer composed of large and small subunits.

The protein resides in the cytoplasm. The catalysed reaction is Exonucleolytic cleavage in either 5'- to 3'- or 3'- to 5'-direction to yield nucleoside 5'-phosphates.. In terms of biological role, bidirectionally degrades single-stranded DNA into large acid-insoluble oligonucleotides, which are then degraded further into small acid-soluble oligonucleotides. This chain is Exodeoxyribonuclease 7 large subunit, found in Haemophilus influenzae (strain 86-028NP).